The primary structure comprises 812 residues: INO80 complex subunit D (812 aa).

Disordered stretches follow at residues Asn521 to Pro573 and Glu581 to Asp600. Over residues Lys524 to Gln558 the composition is skewed to basic residues. A compositionally biased stretch (polar residues) spans Ile585–Thr595.

The protein belongs to the INO80D family. Component of the chromatin-remodeling INO80 complex.

Its subcellular location is the nucleus. In terms of biological role, putative regulatory component of the chromatin remodeling INO80 complex which is involved in transcriptional regulation, DNA replication and probably DNA repair. The polypeptide is INO80 complex subunit D (Xenopus laevis (African clawed frog)).